The sequence spans 99 residues: Cyclin-dependent protein kinase inhibitor SMR7 (99 aa).

Residues 49–70 (ICITPTARGAKTPECPAAPRKR) are disordered.

As to expression, expressed in root meristems after induction.

Its function is as follows. Probable cyclin-dependent protein kinase (CDK) inhibitor that functions as a repressor of mitosis in the endoreduplication cell cycle. Acts as a potent cell cycle inhibitor, regulating a hydroxyurea-dependent checkpoint in leaves. This Arabidopsis thaliana (Mouse-ear cress) protein is Cyclin-dependent protein kinase inhibitor SMR7.